We begin with the raw amino-acid sequence, 326 residues long: DNA-directed RNA polymerase subunit alpha (326 aa).

The interval 1 to 231 (MQTALLKPKI…DQLSVFAALE (231 aa)) is alpha N-terminal domain (alpha-NTD). Residues 247 to 326 (IDPILLRPVD…ENWPPAGLDK (80 aa)) are alpha C-terminal domain (alpha-CTD).

It belongs to the RNA polymerase alpha chain family. As to quaternary structure, homodimer. The RNAP catalytic core consists of 2 alpha, 1 beta, 1 beta' and 1 omega subunit. When a sigma factor is associated with the core the holoenzyme is formed, which can initiate transcription.

The catalysed reaction is RNA(n) + a ribonucleoside 5'-triphosphate = RNA(n+1) + diphosphate. In terms of biological role, DNA-dependent RNA polymerase catalyzes the transcription of DNA into RNA using the four ribonucleoside triphosphates as substrates. The polypeptide is DNA-directed RNA polymerase subunit alpha (Cupriavidus pinatubonensis (strain JMP 134 / LMG 1197) (Cupriavidus necator (strain JMP 134))).